We begin with the raw amino-acid sequence, 395 residues long: Chalcone synthase (395 aa).

Valine 2 is modified (N-acetylvaline). Residue cysteine 169 is part of the active site.

This sequence belongs to the thiolase-like superfamily. Chalcone/stilbene synthases family.

It catalyses the reaction (E)-4-coumaroyl-CoA + 3 malonyl-CoA + 3 H(+) = 2',4,4',6'-tetrahydroxychalcone + 3 CO2 + 4 CoA. The protein operates within secondary metabolite biosynthesis; flavonoid biosynthesis. Functionally, the primary product of this enzyme is 4,2',4',6'-tetrahydroxychalcone (also termed naringenin-chalcone or chalcone) which can under specific conditions spontaneously isomerize into naringenin. This Cardamine amara (Large bitter-cress) protein is Chalcone synthase (CHS).